The sequence spans 236 residues: Leucyl/phenylalanyl-tRNA--protein transferase (236 aa).

It belongs to the L/F-transferase family.

Its subcellular location is the cytoplasm. The enzyme catalyses N-terminal L-lysyl-[protein] + L-leucyl-tRNA(Leu) = N-terminal L-leucyl-L-lysyl-[protein] + tRNA(Leu) + H(+). It catalyses the reaction N-terminal L-arginyl-[protein] + L-leucyl-tRNA(Leu) = N-terminal L-leucyl-L-arginyl-[protein] + tRNA(Leu) + H(+). It carries out the reaction L-phenylalanyl-tRNA(Phe) + an N-terminal L-alpha-aminoacyl-[protein] = an N-terminal L-phenylalanyl-L-alpha-aminoacyl-[protein] + tRNA(Phe). Functions in the N-end rule pathway of protein degradation where it conjugates Leu, Phe and, less efficiently, Met from aminoacyl-tRNAs to the N-termini of proteins containing an N-terminal arginine or lysine. This chain is Leucyl/phenylalanyl-tRNA--protein transferase, found in Aliivibrio salmonicida (strain LFI1238) (Vibrio salmonicida (strain LFI1238)).